The following is a 261-amino-acid chain: Indole-3-glycerol phosphate synthase (261 aa).

The protein belongs to the TrpC family.

It carries out the reaction 1-(2-carboxyphenylamino)-1-deoxy-D-ribulose 5-phosphate + H(+) = (1S,2R)-1-C-(indol-3-yl)glycerol 3-phosphate + CO2 + H2O. It participates in amino-acid biosynthesis; L-tryptophan biosynthesis; L-tryptophan from chorismate: step 4/5. This Burkholderia pseudomallei (strain 1106a) protein is Indole-3-glycerol phosphate synthase.